Consider the following 458-residue polypeptide: tRNA modification GTPase MnmE (458 aa).

(6S)-5-formyl-5,6,7,8-tetrahydrofolate is bound by residues Arg-26, Glu-88, and Arg-127. Residues 224-378 (GLSTAIIGRP…IEDRINQLFF (155 aa)) form the TrmE-type G domain. K(+) is bound at residue Asn-234. GTP is bound by residues 234–239 (NVGKSS), 253–259 (TDIAGTT), and 278–281 (DTAG). Ser-238 contacts Mg(2+). The K(+) site is built by Thr-253, Ile-255, and Thr-258. Thr-259 is a binding site for Mg(2+). Lys-458 is a binding site for (6S)-5-formyl-5,6,7,8-tetrahydrofolate.

It belongs to the TRAFAC class TrmE-Era-EngA-EngB-Septin-like GTPase superfamily. TrmE GTPase family. As to quaternary structure, homodimer. Heterotetramer of two MnmE and two MnmG subunits. K(+) is required as a cofactor.

The protein localises to the cytoplasm. Its function is as follows. Exhibits a very high intrinsic GTPase hydrolysis rate. Involved in the addition of a carboxymethylaminomethyl (cmnm) group at the wobble position (U34) of certain tRNAs, forming tRNA-cmnm(5)s(2)U34. The polypeptide is tRNA modification GTPase MnmE (Streptococcus pyogenes serotype M6 (strain ATCC BAA-946 / MGAS10394)).